A 149-amino-acid polypeptide reads, in one-letter code: Large ribosomal subunit protein uL15 (149 aa).

The segment at 1-52 (MSELLKLHHLRPAPGSNKAKIRKGRGEASKGKTAGRGTKGTKARSTVPAGFE) is disordered.

Belongs to the universal ribosomal protein uL15 family. In terms of assembly, part of the 50S ribosomal subunit.

In terms of biological role, binds to the 23S rRNA. This chain is Large ribosomal subunit protein uL15, found in Thermobifida fusca (strain YX).